The following is a 369-amino-acid chain: Phosphoribosylformylglycinamidine cyclo-ligase (369 aa).

Residues 1–22 (MSKRDTSQPKTGQPKTSKRRNG) are disordered.

Belongs to the AIR synthase family.

The protein resides in the cytoplasm. The catalysed reaction is 2-formamido-N(1)-(5-O-phospho-beta-D-ribosyl)acetamidine + ATP = 5-amino-1-(5-phospho-beta-D-ribosyl)imidazole + ADP + phosphate + H(+). It participates in purine metabolism; IMP biosynthesis via de novo pathway; 5-amino-1-(5-phospho-D-ribosyl)imidazole from N(2)-formyl-N(1)-(5-phospho-D-ribosyl)glycinamide: step 2/2. The protein is Phosphoribosylformylglycinamidine cyclo-ligase of Mesorhizobium japonicum (strain LMG 29417 / CECT 9101 / MAFF 303099) (Mesorhizobium loti (strain MAFF 303099)).